Reading from the N-terminus, the 279-residue chain is Acetylglutamate kinase (279 aa).

Residues 64 to 65 (GG), arginine 86, and asparagine 177 contribute to the substrate site.

Belongs to the acetylglutamate kinase family. ArgB subfamily.

It is found in the cytoplasm. It carries out the reaction N-acetyl-L-glutamate + ATP = N-acetyl-L-glutamyl 5-phosphate + ADP. The protein operates within amino-acid biosynthesis; L-arginine biosynthesis; N(2)-acetyl-L-ornithine from L-glutamate: step 2/4. Its function is as follows. Catalyzes the ATP-dependent phosphorylation of N-acetyl-L-glutamate. This Campylobacter jejuni subsp. jejuni serotype O:23/36 (strain 81-176) protein is Acetylglutamate kinase.